The following is a 436-amino-acid chain: Lactonohydrolase oryL (436 aa).

The N-terminal stretch at 1–27 is a signal peptide; that stretch reads MLSYTSHCLQALLGVASLPYRQYQAYS.

The protein belongs to the SMP-30/CGR1 family.

Its pathway is secondary metabolite biosynthesis. Its function is as follows. Lactonohydrolase; part of the gene cluster that mediates the biosynthesis of oryzines, natural products with an unusual maleidride backbone. The two subunits of the fungal fatty acid synthase oryfasA and oryfasB probably form octenoic acid. This fatty acid is most likely activated by the acyl-CoA ligase oryP to give octenyl-CoA before the citrate synthase-like protein oryE catalyzes condensation with oxaloacetate to form tricarboxylic acid. The next steps of the pathways are conjectural, but a favorite possible route has been proposed, beginning with decarboxylation and concomitant dehydration by the decarboxylase oryM, followed by tautomerization, which may lead to the production of a diene intermediate. Reduction of this diene intermediate could give the known metabolite piliformic acid. On the pathway to oryzine B and oryzine A, however, hydroxylation of the diene by the alpha-ketoglutarate-dependent dioxygenase oryG and lactonisation by the lactonohydrolases oryH or oryL could give oryzine B directly. Finally, enoyl reduction by the dehydrogenase oryD would then convert oryzine B into oryzine A. This chain is Lactonohydrolase oryL, found in Aspergillus oryzae (strain ATCC 42149 / RIB 40) (Yellow koji mold).